Here is a 275-residue protein sequence, read N- to C-terminus: uncharacterized protein (275 aa).

It belongs to the MtfA family.

This is an uncharacterized protein from Synechocystis sp. (strain ATCC 27184 / PCC 6803 / Kazusa).